The primary structure comprises 622 residues: MALLQISEPGQSPDPHQRRIAVGIDLGTTHSLVAAVRNGVAECLPDDQGRVLLPSVVRYLPQGRREIGHAAQAALSTDAGNTIASAKRFMGRTLADIDAPEKLPYRFAEQEAGRGVIGIETVDGTKTAVEVSAEILATLRFRAEDTFNDDIHGAVITVPAYFDDAQRQATKDAAKLAGINLLRLINEPTAAAIAYGLDNGSEGVYAVYDLGGGTFDISILRLSQGVFEVVSTGGDSALGGDDYDAALAEWVAQQTGVVPQTAEDKARWRMAARLCKQALTDAQVATLTAELSTGAVHFDVKRSDFDASTAHLTARSLAAVRRALKDAGLARDEVQGVVLVGGSTRMPQVREAVAEFFGRDPLINLNPDEVVALGAAIQANQLAGNSSSGDMLLLDVIPLSLGVETMGGLVERIISRNETIPTARAQDFTTYKDGQTALAVHVVQGERDLVADCRSLARFELRGIPPMAAGAARIRVTFTVDADGLLSVGAKEQTSGVEAHIHVKPSYGLSDDEVARMLQDGFATAQQDMQARALVEARVDADRMLMATESALQADGDVLAADQRAAIDALIDALRASVGSEDAAVIEAATQALAKGTESFAAERMNRSIQQALAGKSVQSLS.

Belongs to the heat shock protein 70 family.

In terms of biological role, chaperone involved in the maturation of iron-sulfur cluster-containing proteins. Has a low intrinsic ATPase activity which is markedly stimulated by HscB. This is Chaperone protein HscA homolog from Delftia acidovorans (strain DSM 14801 / SPH-1).